The following is a 273-amino-acid chain: uncharacterized protein (273 aa).

The helical transmembrane segment at 7–27 (LTLGICLVLLIILIVGYVIMT) threads the bilayer.

Belongs to the staphylococcal tandem lipoprotein family.

The protein resides in the cell membrane. This is an uncharacterized protein from Staphylococcus aureus (strain MSSA476).